The chain runs to 529 residues: Beta-galactoside alpha-2,6-sialyltransferase 2 (529 aa).

Topologically, residues methionine 1 to arginine 11 are cytoplasmic. Residues methionine 12 to aspartate 32 form a helical; Signal-anchor for type II membrane protein membrane-spanning segment. At serine 33 to serine 529 the chain is on the lumenal side. O-linked (GalNAc...) serine glycosylation occurs at serine 69. Asparagine 211 is a glycosylation site (N-linked (GlcNAc...) asparagine). 3 disulfide bridges follow: cysteine 253-cysteine 519, cysteine 296-cysteine 448, and cysteine 466-cysteine 477.

Belongs to the glycosyltransferase 29 family. In terms of processing, O-glycosylated. Weakly expressed in some tissues, such as small intestine, colon and fetal brain.

Its subcellular location is the golgi apparatus. The protein resides in the golgi stack membrane. It carries out the reaction a beta-D-galactoside + CMP-N-acetyl-beta-neuraminate = an N-acetyl-alpha-neuraminyl-(2-&gt;6)-beta-D-galactosyl derivative + CMP + H(+). Functionally, transfers sialic acid from the donor of substrate CMP-sialic acid to galactose containing acceptor substrates. Has alpha-2,6-sialyltransferase activity toward oligosaccharides that have the Gal-beta-1,4-GlcNAc sequence at the non-reducing end of their carbohydrate groups, but it has weak or no activities toward glycoproteins and glycolipids. The chain is Beta-galactoside alpha-2,6-sialyltransferase 2 (ST6GAL2) from Homo sapiens (Human).